The following is a 213-amino-acid chain: Thiamine-phosphate synthase (213 aa).

4-amino-2-methyl-5-(diphosphooxymethyl)pyrimidine is bound by residues 41–45 (QFRVK) and asparagine 73. Residues aspartate 74 and aspartate 93 each coordinate Mg(2+). Threonine 112 contributes to the 4-amino-2-methyl-5-(diphosphooxymethyl)pyrimidine binding site. 139-141 (SAT) lines the 2-[(2R,5Z)-2-carboxy-4-methylthiazol-5(2H)-ylidene]ethyl phosphate pocket. A 4-amino-2-methyl-5-(diphosphooxymethyl)pyrimidine-binding site is contributed by lysine 142. 2-[(2R,5Z)-2-carboxy-4-methylthiazol-5(2H)-ylidene]ethyl phosphate is bound at residue glycine 171.

This sequence belongs to the thiamine-phosphate synthase family. Mg(2+) serves as cofactor.

It carries out the reaction 2-[(2R,5Z)-2-carboxy-4-methylthiazol-5(2H)-ylidene]ethyl phosphate + 4-amino-2-methyl-5-(diphosphooxymethyl)pyrimidine + 2 H(+) = thiamine phosphate + CO2 + diphosphate. The enzyme catalyses 2-(2-carboxy-4-methylthiazol-5-yl)ethyl phosphate + 4-amino-2-methyl-5-(diphosphooxymethyl)pyrimidine + 2 H(+) = thiamine phosphate + CO2 + diphosphate. It catalyses the reaction 4-methyl-5-(2-phosphooxyethyl)-thiazole + 4-amino-2-methyl-5-(diphosphooxymethyl)pyrimidine + H(+) = thiamine phosphate + diphosphate. It participates in cofactor biosynthesis; thiamine diphosphate biosynthesis; thiamine phosphate from 4-amino-2-methyl-5-diphosphomethylpyrimidine and 4-methyl-5-(2-phosphoethyl)-thiazole: step 1/1. Functionally, condenses 4-methyl-5-(beta-hydroxyethyl)thiazole monophosphate (THZ-P) and 2-methyl-4-amino-5-hydroxymethyl pyrimidine pyrophosphate (HMP-PP) to form thiamine monophosphate (TMP). In Erythrobacter litoralis (strain HTCC2594), this protein is Thiamine-phosphate synthase.